We begin with the raw amino-acid sequence, 356 residues long: Histidinol-phosphate aminotransferase (356 aa).

The residue at position 210 (Lys-210) is an N6-(pyridoxal phosphate)lysine.

The protein belongs to the class-II pyridoxal-phosphate-dependent aminotransferase family. Histidinol-phosphate aminotransferase subfamily. As to quaternary structure, homodimer. The cofactor is pyridoxal 5'-phosphate.

The catalysed reaction is L-histidinol phosphate + 2-oxoglutarate = 3-(imidazol-4-yl)-2-oxopropyl phosphate + L-glutamate. It functions in the pathway amino-acid biosynthesis; L-histidine biosynthesis; L-histidine from 5-phospho-alpha-D-ribose 1-diphosphate: step 7/9. This chain is Histidinol-phosphate aminotransferase, found in Gluconacetobacter diazotrophicus (strain ATCC 49037 / DSM 5601 / CCUG 37298 / CIP 103539 / LMG 7603 / PAl5).